The chain runs to 331 residues: MKKSLIALTLAALPVAAMADVTLYGTIKAGVETSRSVAHNGAQAASVETGTGIVDLGSKIGFKGQEDLGNGLKAIWQVEQKASIAGTDSGWGNRQSFIGLKGGFGKLRVGRLNSVLKDTGDINPWDSKSDYLGVNKIAEPEARLISVRYDSPEFAGLSGSVQYALNDNAGRHNSESYHAGFNYKNGGFFVQYGGAYKRHHQVQENVNIEKYQIHRLVSGYDNDALYASVAVQQQDAKLVEENYSHNSQTEVAATLAYRFGNVTPRVSYAHGFKGSFDATNYNNDYDQVVVGAEYDFSKRTSALVSAGWLQEGKGESKFVSTAGGVGLRHKF.

Positions M1–A19 are cleaved as a signal peptide.

This sequence belongs to the Gram-negative porin family. As to quaternary structure, homotrimer.

The protein resides in the cell outer membrane. In terms of biological role, serves as a slightly cation selective porin. The sequence is that of Major outer membrane protein P.IB (porB) from Neisseria meningitidis serogroup B.